Reading from the N-terminus, the 420-residue chain is tRNA (guanine-N(7)-)-methyltransferase non-catalytic subunit TRM82 (420 aa).

The segment covering 59–68 has biased composition (basic and acidic residues); sequence KENDSKRQKS. Residues 59 to 82 are disordered; the sequence is KENDSKRQKSESGQAKVSKIPTPG. WD repeat units lie at residues 87–127, 179–220, 224–266, and 340–379; these read PIYN…DNCL, GHVS…VIKN, GHHE…AKIE, and SYEDNVLDMCYIEATNTLISAHDSDKNQLFQQQKFDEETN.

Belongs to the WD repeat TRM82 family. Forms a heterodimer with the catalytic subunit TRM8.

The protein resides in the nucleus. Its pathway is tRNA modification; N(7)-methylguanine-tRNA biosynthesis. Required for the formation of N(7)-methylguanine at position 46 (m7G46) in tRNA. In the complex, it is required to stabilize and induce conformational changes of the catalytic subunit. This chain is tRNA (guanine-N(7)-)-methyltransferase non-catalytic subunit TRM82, found in Meyerozyma guilliermondii (strain ATCC 6260 / CBS 566 / DSM 6381 / JCM 1539 / NBRC 10279 / NRRL Y-324) (Yeast).